The primary structure comprises 239 residues: Phosphothreonine lyase OspF (239 aa).

Catalysis depends on His104, which acts as the Proton donor. Lys134 functions as the Proton acceptor in the catalytic mechanism.

This sequence belongs to the phosphothreonine lyase family.

The protein localises to the secreted. Its activity is regulated as follows. Inhibited by the tyrosine phosphatase inhibitor vanadate. Catalyzes the removal of the phosphate group from the phosphothreonine in the mitogen-activated protein kinases such as MAPK2/ERK2, MAPK3/ERK1, MAPK8 and MAPK14 in an irreversible reaction, thus preventing the downstream phosphorylation of histone H3. This epigenetic modification results in inhibition of the transcription of a specific subset of pro-inflammatory genes, and ultimately to a reduced immune response against the invading pathogen. The diminished immune response enhances the bacterium's ability to disseminate and multiply within the host. The chain is Phosphothreonine lyase OspF (ospF) from Shigella flexneri.